A 692-amino-acid chain; its full sequence is 5-taurinomethyluridine-[tRNA] synthase subunit MTO1, mitochondrial (692 aa).

Residues 1–25 (MFYLRGCGRWVAASFTKQQFPLVRL) constitute a mitochondrion transit peptide. Residues 43-48 (GGGHAG), Val155, Ser218, and Gln407 each bind FAD. Residue Lys508 is modified to N6-methyllysine. Positions 669–692 (AAMNESPKTDQCLRNADRLQERQL) are disordered. Positions 683–692 (NADRLQERQL) are enriched in basic and acidic residues.

It belongs to the MnmG family. As to quaternary structure, homodimer; forms a dimer in the presence of potassium. Interacts with GTPBP3; forms the GTPBP3-MTO1 complex composed of homodimers of GTPBP3 and MTO1. FAD is required as a cofactor.

Its subcellular location is the mitochondrion. The catalysed reaction is 5,10-methylenetetrahydrofolate + uridine(34) in tRNA + taurine + GTP + A + H2O = 5-taurinomethyluridine(34) in tRNA + 7,8-dihydrofolate + GDP + AH2 + phosphate + H(+). In terms of biological role, component of the GTPBP3-MTO1 complex that catalyzes the 5-taurinomethyluridine (taum(5)U) modification at the 34th wobble position (U34) of mitochondrial tRNAs (mt-tRNAs), which plays a role in mt-tRNA decoding and mitochondrial translation. Taum(5)U formation on mammalian mt-tRNA requires the presence of both GTPBP3-mediated GTPase activity and MTO1 catalytic activity. The protein is 5-taurinomethyluridine-[tRNA] synthase subunit MTO1, mitochondrial (MTO1) of Macaca fascicularis (Crab-eating macaque).